The chain runs to 254 residues: NFU1 iron-sulfur cluster scaffold homolog, mitochondrial (254 aa).

The N-terminal 9 residues, M1–W9, are a transit peptide targeting the mitochondrion. The tract at residues I173 to V241 is nifU. [4Fe-4S] cluster is bound by residues C210 and C213.

This sequence belongs to the NifU family. As to quaternary structure, monomer and homohexamer; the apo-NFU1 is a monomer, while the holo-NFU1 is a hexamer composed of a trimer of dimer that is probably linked by some 4Fe-4S cluster. Interacts with HIRA and EPM2A/laforin. Interacts with BOLA3. Interacts with HSPA9. In terms of tissue distribution, ubiquitous. Expression in adult lung is weak compared to fetal lung.

It is found in the mitochondrion. Its subcellular location is the cytoplasm. It localises to the cytosol. Its function is as follows. Iron-sulfur cluster scaffold protein which can assemble [4Fe-4S] clusters and deliver them to target proteins. This is NFU1 iron-sulfur cluster scaffold homolog, mitochondrial (NFU1) from Homo sapiens (Human).